Reading from the N-terminus, the 249-residue chain is Solute carrier family 25 member 35 (249 aa).

Solcar repeat units follow at residues 1 to 90 (MDFL…AEAG) and 152 to 243 (QSWK…LRMV). Transmembrane regions (helical) follow at residues 38-58 (TYQR…KVDG), 59-79 (LAAL…MNGI), 154-174 (WKVA…AMTP), and 226-249 (LGPH…TYTK).

Belongs to the mitochondrial carrier (TC 2.A.29) family.

It localises to the mitochondrion inner membrane. The catalysed reaction is a dicarboxylate(in) + sulfate(out) = a dicarboxylate(out) + sulfate(in). Putative antiporter that exchanges dicarboxylates and sulfur oxoanions across the inner membrane of mitochondria. This is Solute carrier family 25 member 35 (SLC25A35) from Bos taurus (Bovine).